We begin with the raw amino-acid sequence, 380 residues long: Cytochrome b (380 aa).

The next 4 membrane-spanning stretches (helical) occupy residues 34-54, 78-99, 114-134, and 179-199; these read FGSLLGICLMTQILTGLLLAM, WLIRNLHANGASFFFICIYLHI, WNTGILLLLTLMATAFVGYVL, and FFALHFLLPFMIAGLTLIHLT. Residues histidine 84 and histidine 98 each coordinate heme b. Heme b is bound by residues histidine 183 and histidine 197. A ubiquinone is bound at residue histidine 202. The next 4 helical transmembrane spans lie at 227 to 247, 289 to 309, 321 to 341, and 348 to 368; these read LKDILGFTLMFLPLTALALFS, LGGVLALAASVLVLFLSPLLH, LSQLLFWLLVTNLFILTWIGS, and FIIIGQLASITYFTILLVLFP.

Belongs to the cytochrome b family. As to quaternary structure, the cytochrome bc1 complex contains 11 subunits: 3 respiratory subunits (MT-CYB, CYC1 and UQCRFS1), 2 core proteins (UQCRC1 and UQCRC2) and 6 low-molecular weight proteins (UQCRH/QCR6, UQCRB/QCR7, UQCRQ/QCR8, UQCR10/QCR9, UQCR11/QCR10 and a cleavage product of UQCRFS1). This cytochrome bc1 complex then forms a dimer. The cofactor is heme b.

Its subcellular location is the mitochondrion inner membrane. Component of the ubiquinol-cytochrome c reductase complex (complex III or cytochrome b-c1 complex) that is part of the mitochondrial respiratory chain. The b-c1 complex mediates electron transfer from ubiquinol to cytochrome c. Contributes to the generation of a proton gradient across the mitochondrial membrane that is then used for ATP synthesis. The chain is Cytochrome b (MT-CYB) from Thalassarche impavida (Albatross).